Here is a 1051-residue protein sequence, read N- to C-terminus: Protein ALWAYS EARLY 2 (1051 aa).

Basic residues-rich tracts occupy residues 1-11 (MAPVRKSRSVN) and 27-36 (SKKNKLRKKL). Positions 1-37 (MAPVRKSRSVNKRFTNETSPRKDAGKSKKNKLRKKLS) are disordered. Positions 39 to 93 (KLGPQWTRLELERFYDAYRKHGQEWRRVAAAIRNSRSVDMVEALFNMNRAYLSLP) constitute an SANT domain. Disordered stretches follow at residues 114–158 (EGSG…IGSP), 170–210 (ANGT…RKQF), 225–293 (TDAS…KDTT), 323–375 (AECN…TSGA), 397–605 (SELS…SSRS), and 948–981 (SIEH…NAQM). Residues 120–130 (GEGHDASEVPR) are compositionally biased toward basic and acidic residues. Positions 131-140 (KQQKRKRAKP) are enriched in basic residues. Residues 279–293 (ESSRERKLDSDKDTT) show a composition bias toward basic and acidic residues. Over residues 323-332 (AECNDSDDNG) the composition is skewed to acidic residues. Basic and acidic residues-rich tracts occupy residues 350 to 372 (AAIE…DKHT) and 403 to 417 (LKEE…EKSS). The span at 560–574 (KQVSDSGPTSLSQKP) shows a compositional bias: polar residues. The segment covering 586–597 (LQEKAKSSETTH) has biased composition (basic and acidic residues). A compositionally biased stretch (polar residues) spans 967 to 981 (NDLNSQDGSEKNAQM).

Interacts with SNL1 (via PAH3). As to expression, expressed ubiquitously in vegetative and reproductive tissues.

It is found in the nucleus. The protein is Protein ALWAYS EARLY 2 (ALY2) of Arabidopsis thaliana (Mouse-ear cress).